We begin with the raw amino-acid sequence, 92 residues long: Large ribosomal subunit protein bL36m (92 aa).

The transit peptide at 1–54 directs the protein to the mitochondrion; the sequence is MASLGRKFFAVGVLSRVFPSAFNAQKGLLKNASMFLTPAFRLSPSLLPWNFSRG.

The protein belongs to the bacterial ribosomal protein bL36 family. As to quaternary structure, component of the mitochondrial large ribosomal subunit (mt-LSU). Mature yeast 74S mitochondrial ribosomes consist of a small (37S) and a large (54S) subunit. The 37S small subunit contains a 15S ribosomal RNA (15S mt-rRNA) and at least 32 different proteins. The 54S large subunit contains a 21S rRNA (21S mt-rRNA) and at least 45 different proteins. bL36m has a zinc binding site.

It is found in the mitochondrion. Component of the mitochondrial ribosome (mitoribosome), a dedicated translation machinery responsible for the synthesis of mitochondrial genome-encoded proteins, including at least some of the essential transmembrane subunits of the mitochondrial respiratory chain. The mitoribosomes are attached to the mitochondrial inner membrane and translation products are cotranslationally integrated into the membrane. bL36m may be involved in a process influencing telomere capping. This chain is Large ribosomal subunit protein bL36m (rtc6), found in Schizosaccharomyces pombe (strain 972 / ATCC 24843) (Fission yeast).